We begin with the raw amino-acid sequence, 288 residues long: NAD(P)H-hydrate epimerase (288 aa).

A mitochondrion-targeting transit peptide spans 1 to 32 (MSGLRALLGLGLLVAGSRLSRVRVQAGSCRAG). The residue at position 49 (Ser-49) is a Phosphoserine. The 211-residue stretch at 65–275 (AQAVDQELFN…ALEKKYQLNL (211 aa)) folds into the YjeF N-terminal domain. 119-123 (NNGGD) serves as a coordination point for (6S)-NADPHX. Residue Asn-120 coordinates K(+). At Lys-144 the chain carries N6-succinyllysine. Residue Asp-185 coordinates K(+). Residues 189-195 (GFSFTGE) and Asp-218 contribute to the (6S)-NADPHX site. K(+) is bound at residue Ser-221.

Belongs to the NnrE/AIBP family. In terms of assembly, homodimer. Interacts with APOA1 and APOA2. The cofactor is K(+). Undergoes physiological phosphorylation during sperm capacitation, downstream to PKA activation.

It localises to the mitochondrion. The protein localises to the secreted. The catalysed reaction is (6R)-NADHX = (6S)-NADHX. The enzyme catalyses (6R)-NADPHX = (6S)-NADPHX. In terms of biological role, catalyzes the epimerization of the S- and R-forms of NAD(P)HX, a damaged form of NAD(P)H that is a result of enzymatic or heat-dependent hydration. This is a prerequisite for the S-specific NAD(P)H-hydrate dehydratase to allow the repair of both epimers of NAD(P)HX. Accelerates cholesterol efflux from endothelial cells to high-density lipoprotein (HDL) and thereby regulates angiogenesis. This is NAD(P)H-hydrate epimerase from Bos taurus (Bovine).